A 252-amino-acid chain; its full sequence is Floral homeotic protein AGAMOUS (252 aa).

The MADS-box domain occupies 19–73 (RGKIEIKRIENTTNRQVTFCKRRNGLLKKAYELSVLCDAEVALIVFSSRGRLYEY). In terms of domain architecture, K-box spans 103–193 (AQYYQQESAK…RAKIAENERN (91 aa)).

The protein localises to the nucleus. Probable transcription factor involved in regulating genes that determines stamen and carpel development in wild-type flowers. The protein is Floral homeotic protein AGAMOUS (AG1) of Brassica napus (Rape).